The following is a 216-amino-acid chain: Elongation factor Ts (216 aa).

The tract at residues 81–84 (TDFV) is involved in Mg(2+) ion dislocation from EF-Tu.

Belongs to the EF-Ts family.

It is found in the cytoplasm. Associates with the EF-Tu.GDP complex and induces the exchange of GDP to GTP. It remains bound to the aminoacyl-tRNA.EF-Tu.GTP complex up to the GTP hydrolysis stage on the ribosome. This is Elongation factor Ts from Geotalea uraniireducens (strain Rf4) (Geobacter uraniireducens).